We begin with the raw amino-acid sequence, 484 residues long: Cobyric acid synthase (484 aa).

In terms of domain architecture, GATase cobBQ-type spans 251–438 (ALKIAVPVLP…LHGLFGSDAY (188 aa)). Catalysis depends on Cys-333, which acts as the Nucleophile. The active site involves His-430.

The protein belongs to the CobB/CobQ family. CobQ subfamily.

It functions in the pathway cofactor biosynthesis; adenosylcobalamin biosynthesis. Functionally, catalyzes amidations at positions B, D, E, and G on adenosylcobyrinic A,C-diamide. NH(2) groups are provided by glutamine, and one molecule of ATP is hydrogenolyzed for each amidation. This chain is Cobyric acid synthase, found in Rhizobium leguminosarum bv. trifolii (strain WSM2304).